Consider the following 269-residue polypeptide: Proenkephalin-A (269 aa).

The first 24 residues, 1–24 (MAQFLRLCIWLLALGSCLLATVQA), serve as a signal peptide directing secretion. 3 disulfide bridges follow: Cys26/Cys48, Cys30/Cys52, and Cys33/Cys65. Positions 165–191 (DNRAKDSHQQESTNNDEDSTSKRYGGF) are disordered. 2 propeptides span residues 198 to 209 (SPQLEDEAKELQ) and 219 to 229 (VGRPEWWMDYQ). Ser253 bears the Phosphoserine mark.

This sequence belongs to the opioid neuropeptide precursor family. In terms of processing, proenkephalin-A is cleaved by CTSL to generate Met-enkephalin. Processed and degraded by ACE. Post-translationally, probably cleaved by ACE. In terms of processing, processed by ACE to generate Met-enkephalin in the nucleus accumbens of the brain. The N-terminal domain contains 6 conserved cysteines thought to be involved in disulfide bonding and/or processing. Expressed in brain, heart and testis.

The protein resides in the secreted. It is found in the cytoplasmic vesicle. It localises to the secretory vesicle. The protein localises to the chromaffin granule lumen. Neuropeptide that competes with and mimic the effects of opiate drugs. They play a role in a number of physiologic functions, including pain perception and responses to stress. Its function is as follows. Met-enkephalin-Arg-Phe neuropeptide acts as a strong ligand of Mu-type opioid receptor OPRM1. Met-enkephalin-Arg-Phe-binding to OPRM1 in the nucleus accumbens of the brain increases activation of OPRM1, leading to long-term synaptic depression of glutamate release. Functionally, increases glutamate release in the striatum and decreases GABA concentration in the striatum. In terms of biological role, increases glutamate release in the striatum. This chain is Proenkephalin-A (Penk), found in Rattus norvegicus (Rat).